A 132-amino-acid chain; its full sequence is Small ribosomal subunit protein uS11 (132 aa).

Belongs to the universal ribosomal protein uS11 family. As to quaternary structure, part of the 30S ribosomal subunit.

In terms of biological role, located on the platform of the 30S subunit. The protein is Small ribosomal subunit protein uS11 of Sulfolobus acidocaldarius (strain ATCC 33909 / DSM 639 / JCM 8929 / NBRC 15157 / NCIMB 11770).